A 253-amino-acid polypeptide reads, in one-letter code: 1-(5-phosphoribosyl)-5-[(5-phosphoribosylamino)methylideneamino] imidazole-4-carboxamide isomerase (253 aa).

Catalysis depends on Asp11, which acts as the Proton acceptor. Asp132 serves as the catalytic Proton donor.

It belongs to the HisA/HisF family.

It is found in the cytoplasm. It carries out the reaction 1-(5-phospho-beta-D-ribosyl)-5-[(5-phospho-beta-D-ribosylamino)methylideneamino]imidazole-4-carboxamide = 5-[(5-phospho-1-deoxy-D-ribulos-1-ylimino)methylamino]-1-(5-phospho-beta-D-ribosyl)imidazole-4-carboxamide. The protein operates within amino-acid biosynthesis; L-histidine biosynthesis; L-histidine from 5-phospho-alpha-D-ribose 1-diphosphate: step 4/9. This chain is 1-(5-phosphoribosyl)-5-[(5-phosphoribosylamino)methylideneamino] imidazole-4-carboxamide isomerase, found in Methylobacterium nodulans (strain LMG 21967 / CNCM I-2342 / ORS 2060).